We begin with the raw amino-acid sequence, 209 residues long: MTKGILGRKIGMTQVFAENGDLIPVTVIEAAPNVVLQKKTAENDGYEAIQLGFDDKREKLSNKPEKGHVAKAETAPKRFVKELRGVEMDAYEVGQEVKVEIFSAGEIVDVTGVSKGKGFQGAIKRHGQSRGPMSHGSRYHRRPGSMGPVDPNRVFKGKLLPGRMGGEQITVQNLEIVKVDAERNLLLIKGNVPGAKKSLITVKSAVKSK.

Residues 122–152 (AIKRHGQSRGPMSHGSRYHRRPGSMGPVDPN) form a disordered region.

It belongs to the universal ribosomal protein uL3 family. Part of the 50S ribosomal subunit. Forms a cluster with proteins L14 and L19. Interacts with RNA helicase CshA.

One of the primary rRNA binding proteins, it binds directly near the 3'-end of the 23S rRNA, where it nucleates assembly of the 50S subunit. Strongly stimulates 23S rRNA precursor processing by mini-ribonuclease 3 (MrnC); 20-30% DMSO can replace L3, suggesting the protein may alter rRNA conformation. This Bacillus subtilis (strain 168) protein is Large ribosomal subunit protein uL3.